The chain runs to 388 residues: (S)-8-oxocitronellyl enol synthase (388 aa).

Residues 38 to 40, 66 to 67, 84 to 85, 108 to 109, and Q142 each bind NADP(+); these read TGI, RR, DV, and SW. Active-site residues include K146 and Y178. Substrate-binding residues include K146 and Y178. Residues Y178, V204, and 211-213 each bind NADP(+); that span reads SMM. S349 provides a ligand contact to substrate.

It belongs to the short-chain dehydrogenases/reductases (SDR) family. Highly divergent. Homodimer. Expressed in internal phloem-associated parenchyma (IPAP) cells.

The protein localises to the cytoplasm. Its subcellular location is the cytosol. It catalyses the reaction (S)-8-oxocitronellyl enol + NADP(+) = (6E)-8-oxogeranial + NADPH + H(+). It carries out the reaction (S)-8-oxocitronellyl enol + NAD(+) = (6E)-8-oxogeranial + NADH + H(+). Iridoid synthase that catalyzes the first step in generation of the iridoid ring scaffold using the linear monoterpene (6E)-8-oxogeranial as substrate. Iridoids comprise a large family of distinctive bicyclic monoterpenes that possess a wide range of pharmacological activities, including anticancer, anti-inflammatory, antifungal and antibacterial activities. The protein is (S)-8-oxocitronellyl enol synthase of Catharanthus roseus (Madagascar periwinkle).